The chain runs to 190 residues: uncharacterized protein (190 aa).

The 58-residue stretch at 1–58 (MDKRILAETFRLIKQKGFSFTMNDLAAALGTSKRTLYAYYSSKDQLVEAVVEQFIAEM) folds into the HTH tetR-type domain. The segment at residues 21-40 (TMNDLAAALGTSKRTLYAYY) is a DNA-binding region (H-T-H motif).

This is an uncharacterized protein from Bacillus subtilis (strain 168).